We begin with the raw amino-acid sequence, 299 residues long: Tyrosine recombinase XerC (299 aa).

The 85-residue stretch at 1 to 85 (MEQHLDAYCM…AVRGFYKYLN (85 aa)) folds into the Core-binding (CB) domain. A Tyr recombinase domain is found at 106 to 285 (RLPKTLDTDR…DFQHLATVYD (180 aa)). Active-site residues include arginine 146, lysine 170, histidine 237, arginine 240, and histidine 263. Residue tyrosine 272 is the O-(3'-phospho-DNA)-tyrosine intermediate of the active site.

The protein belongs to the 'phage' integrase family. XerC subfamily. As to quaternary structure, forms a cyclic heterotetrameric complex composed of two molecules of XerC and two molecules of XerD.

It localises to the cytoplasm. Site-specific tyrosine recombinase, which acts by catalyzing the cutting and rejoining of the recombining DNA molecules. The XerC-XerD complex is essential to convert dimers of the bacterial chromosome into monomers to permit their segregation at cell division. It also contributes to the segregational stability of plasmids. This chain is Tyrosine recombinase XerC, found in Pseudomonas savastanoi pv. phaseolicola (strain 1448A / Race 6) (Pseudomonas syringae pv. phaseolicola (strain 1448A / Race 6)).